The primary structure comprises 962 residues: Activity-dependent neuroprotective protein 2a (962 aa).

A C2H2-type 1 zinc finger spans residues 75-98; sequence LCCSLCWYSSRSVPTFRSHIHRCH. The C2H2-type 2; degenerate zinc-finger motif lies at 108 to 130; the sequence is LMCPYCPFVSSPKVTEQHIQFFH. The segment at 165–188 adopts a C2H2-type 3; degenerate zinc-finger fold; sequence YTCATCGYHDSLLYVMKKHVLVNH. The segment at 219 to 244 adopts a C2H2-type 4 zinc-finger fold; the sequence is YHCKLCKLPAETIEHLLYHILSSEKH. Residues 527-547 form a C2H2-type 5; degenerate zinc finger; it reads VKCLRCKILLTEQGIFQHLLH. C2H2-type zinc fingers lie at residues 549–572 and 650–673; these read LKCLFCPQMFYSFKQIMEHSKKEH and NACPFCQVKLQNPEDYELHLQTKH. Residues 688–712 form a C2H2-type 8; degenerate zinc finger; that stretch reads YKCIYCFGVYTEKSTPKTISIHVQR. The interval 753 to 781 is disordered; that stretch reads QGAPEFPKPKKEAVTPRNRRRNTKASKTG. Positions 795 to 854 form a DNA-binding region, homeobox; it reads PMGMERTSFEDRKDFLSQYFHRKPYVTKTEIELLASRLWINKADVKAHFNSKLTKCLKAI.

It localises to the nucleus. Its function is as follows. May be involved in transcriptional regulation. Required for progression through late erythroid differentiation. May be involved in vasculogenesis. The polypeptide is Activity-dependent neuroprotective protein 2a (Danio rerio (Zebrafish)).